The primary structure comprises 640 residues: Threonine--tRNA ligase (640 aa).

In terms of domain architecture, TGS spans 1–61 (MPAITLPDGS…EHDAYVEIVT (61 aa)). Residues 242–533 (DHRRLGRTQD…LIEHYGGALP (292 aa)) form a catalytic region. 3 residues coordinate Zn(2+): C333, H384, and H510.

The protein belongs to the class-II aminoacyl-tRNA synthetase family. In terms of assembly, homodimer. Zn(2+) is required as a cofactor.

It localises to the cytoplasm. It catalyses the reaction tRNA(Thr) + L-threonine + ATP = L-threonyl-tRNA(Thr) + AMP + diphosphate + H(+). Its function is as follows. Catalyzes the attachment of threonine to tRNA(Thr) in a two-step reaction: L-threonine is first activated by ATP to form Thr-AMP and then transferred to the acceptor end of tRNA(Thr). Also edits incorrectly charged L-seryl-tRNA(Thr). The protein is Threonine--tRNA ligase of Halorhodospira halophila (strain DSM 244 / SL1) (Ectothiorhodospira halophila (strain DSM 244 / SL1)).